The sequence spans 260 residues: E3 ubiquitin-protein ligase SRFP1 (260 aa).

The CHY-type zinc-finger motif lies at 11–80; sequence FGRMGFGCKH…VAQVCYNCGV (70 aa). Zn(2+) contacts are provided by Cys18, His20, Cys31, Cys32, Cys38, Cys41, His42, His50, Cys62, Cys65, Cys75, Cys78, Cys87, Cys90, His103, Cys104, Cys107, Cys110, His120, Cys121, Cys124, Cys127, His136, and Cys138. A CTCHY-type zinc finger spans residues 82–146; sequence MGEYFCSACK…CCIENSMKNN (65 aa). The RING-type; atypical zinc-finger motif lies at 147–190; that stretch reads CPICYEYLFDSLRETSVLRCGHTMHLQCFHEMLKHDKFSCPICS.

As to expression, expressed in roots, leaves, nodes and panicles.

It localises to the nucleus. The protein localises to the cytoplasm. The catalysed reaction is S-ubiquitinyl-[E2 ubiquitin-conjugating enzyme]-L-cysteine + [acceptor protein]-L-lysine = [E2 ubiquitin-conjugating enzyme]-L-cysteine + N(6)-ubiquitinyl-[acceptor protein]-L-lysine.. It participates in protein modification; protein ubiquitination. Its function is as follows. Possesses E3 ubiquitin-protein ligase activity in vitro. Possesses transactivation activity in yeast cells. May modulate abiotic stress responses by negatively regulating antioxidant enzymes-mediated reactive oxygen species (ROS) removal. The chain is E3 ubiquitin-protein ligase SRFP1 from Oryza sativa subsp. japonica (Rice).